We begin with the raw amino-acid sequence, 169 residues long: 16S rRNA aminocarboxypropyltransferase (169 aa).

The S-adenosyl-L-methionine site is built by T17, L67, L90, and T109.

Belongs to the TDD superfamily. TSR3 family.

The protein localises to the cytoplasm. It catalyses the reaction an N(1)-methylpseudouridine in rRNA + S-adenosyl-L-methionine = N(1)-methyl-N(3)-[(3S)-3-amino-3-carboxypropyl]pseudouridine in rRNA + S-methyl-5'-thioadenosine + H(+). Functionally, aminocarboxypropyltransferase that catalyzes the aminocarboxypropyl transfer on pseudouridine corresponding to position 914 in M.jannaschii 16S rRNA. It constitutes the last step in biosynthesis of the hypermodified N1-methyl-N3-(3-amino-3-carboxypropyl) pseudouridine (m1acp3-Psi). This chain is 16S rRNA aminocarboxypropyltransferase, found in Methanothermobacter thermautotrophicus (strain ATCC 29096 / DSM 1053 / JCM 10044 / NBRC 100330 / Delta H) (Methanobacterium thermoautotrophicum).